The primary structure comprises 272 residues: Prohibitin 1 (272 aa).

Ala2 bears the N-acetylalanine mark. At Thr91 the chain carries Phosphothreonine. Lys128 and Lys186 each carry N6-acetyllysine. The stretch at 177–211 (KEFTEAVEAKQVAQQEAERARFVVEKAEQQKKAAI) forms a coiled coil. Lys202 carries the N6-acetyllysine; alternate modification. The residue at position 202 (Lys202) is an N6-succinyllysine; alternate. Position 249 is a phosphotyrosine (Tyr249).

This sequence belongs to the prohibitin family. Interacts with PHB2. Interacts with STOML2. Interacts with CD86 (via cytoplasmic domain); the interactions increases after priming with CD40. As to quaternary structure, (Microbial infection) Interacts with human enterovirus 71/EV-71 capsid protein VP0, protein 3CD and protease 3C. In terms of tissue distribution, widely expressed in different tissues.

It is found in the mitochondrion inner membrane. The protein resides in the nucleus. Its subcellular location is the cell membrane. It localises to the cytoplasm. Its activity is regulated as follows. Target of the anti-cancer drug Rocaglamide (Roc-A). Protein with pleiotropic attributes mediated in a cell-compartment- and tissue-specific manner, which include the plasma membrane-associated cell signaling functions, mitochondrial chaperone, and transcriptional co-regulator of transcription factors in the nucleus. Plays a role in adipose tissue and glucose homeostasis in a sex-specific manner. Contributes to pulmonary vascular remodeling by accelerating proliferation of pulmonary arterial smooth muscle cells. In terms of biological role, in the mitochondria, together with PHB2, forms large ring complexes (prohibitin complexes) in the inner mitochondrial membrane (IMM) and functions as a chaperone protein that stabilizes mitochondrial respiratory enzymes and maintains mitochondrial integrity in the IMM, which is required for mitochondrial morphogenesis, neuronal survival, and normal lifespan. The prohibitin complex, with DNAJC19, regulates cardiolipin remodeling and the protein turnover of OMA1 in a cardiolipin-binding manner. Regulates mitochondrial respiration activity playing a role in cellular aging. The prohibitin complex plays a role of mitophagy receptor involved in targeting mitochondria for autophagic degradation. Involved in mitochondrial-mediated antiviral innate immunity, activates RIG-I-mediated signal transduction and production of IFNB1 and pro-inflammatory cytokine IL6. Its function is as follows. In the nucleus, acts as a transcription coregulator, enhances promoter binding by TP53, a transcription factor it activates, but reduces the promoter binding by E2F1, a transcription factor it represses. Interacts with STAT3 to affect IL17 secretion in T-helper Th17 cells. Functionally, in the plasma membrane, cooperates with CD86 to mediate CD86-signaling in B lymphocytes that regulates the level of IgG1 produced through the activation of distal signaling intermediates. Upon CD40 engagement, required to activate NF-kappa-B signaling pathway via phospholipase C and protein kinase C activation. (Microbial infection) In neuronal cells, cell surface-expressed PHB1 is involved in human enterovirus 71/EV-71 entry into neuronal cells specifically, while membrane-bound mitochondrial PHB1 associates with the virus replication complex and facilitates viral replication. May serve as a receptor for EV71. This Mus musculus (Mouse) protein is Prohibitin 1 (Phb1).